Consider the following 688-residue polypeptide: Methionine--tRNA ligase (688 aa).

Residues 20 to 30 (PYANGSIHLGH) carry the 'HIGH' region motif. Residues Cys-151, Cys-154, Cys-164, and Cys-167 each contribute to the Zn(2+) site. The 'KMSKS' region motif lies at 337-341 (KMSKS). Lys-340 contacts ATP. The tRNA-binding domain maps to 587-688 (TFAQVDLRIA…EGAQPGMRVM (102 aa)).

The protein belongs to the class-I aminoacyl-tRNA synthetase family. MetG type 1 subfamily. As to quaternary structure, homodimer. It depends on Zn(2+) as a cofactor.

The protein resides in the cytoplasm. It carries out the reaction tRNA(Met) + L-methionine + ATP = L-methionyl-tRNA(Met) + AMP + diphosphate. In terms of biological role, is required not only for elongation of protein synthesis but also for the initiation of all mRNA translation through initiator tRNA(fMet) aminoacylation. This Vibrio parahaemolyticus serotype O3:K6 (strain RIMD 2210633) protein is Methionine--tRNA ligase.